The sequence spans 484 residues: Trigger factor (484 aa).

The 80-residue stretch at 165-244 folds into the PPIase FKBP-type domain; sequence GDFVQIDLTA…VQSVKERELP (80 aa). A disordered region spans residues 429 to 484; sequence DAVSEEPADADAEAVVADAPAEEAAEAPAAEEAPAEKPKKKAPAKKKASEKAADSE. The segment covering 430–440 has biased composition (acidic residues); that stretch reads AVSEEPADADA. A compositionally biased stretch (basic and acidic residues) spans 475 to 484; the sequence is KASEKAADSE.

The protein belongs to the FKBP-type PPIase family. Tig subfamily.

It localises to the cytoplasm. The catalysed reaction is [protein]-peptidylproline (omega=180) = [protein]-peptidylproline (omega=0). Its function is as follows. Involved in protein export. Acts as a chaperone by maintaining the newly synthesized protein in an open conformation. Functions as a peptidyl-prolyl cis-trans isomerase. The protein is Trigger factor of Clavibacter michiganensis subsp. michiganensis (strain NCPPB 382).